We begin with the raw amino-acid sequence, 431 residues long: MKLSEVFSKLIEKIRGVDYIDEAVLQELSREIQRSLLKADVPLELVKAFTDSAVKRIREEKPPAGIPPREYLVYVLYEELVKLLGGEQPAEFKPTKKPYVVLLLGVEGSGKTTTAAKLAKYLAKRGYKVGLVETDTIRPAAFDQLKQLAEKIGVPFYGERDGKNAVEIAVRGVQNFKNMDVVIIDTAGRHRNEEELLKEVKAIYDAVKPDEVFLVIDATVGKLAAAQAEAFMKYLPIHSVIITKMDSTARGGGALAAVAKTGARVKFIGVGEDVDEFELFNPRKFVARVLGMGDLDALVEKIKAVFEEDKVLEELESGRLDLLTFKKQIDSLLKLGPLSKVFQLLPSNFAIKVSEEQIELSQKNLRKWKAILSSMTMEELKHPEVLNASRIRRIAMGAGVTPKDVKEMLTVFENMKKMSKMLKRQMRMKMR.

GTP is bound by residues 105-112 (GVEGSGKT), 185-189 (DTAGR), and 243-246 (TKMD).

Belongs to the GTP-binding SRP family. SRP54 subfamily. Part of the signal recognition particle protein translocation system, which is composed of SRP and FtsY. Archaeal SRP consists of a 7S RNA molecule of 300 nucleotides and two protein subunits: SRP54 and SRP19.

Its subcellular location is the cytoplasm. The enzyme catalyses GTP + H2O = GDP + phosphate + H(+). In terms of biological role, involved in targeting and insertion of nascent membrane proteins into the cytoplasmic membrane. Binds to the hydrophobic signal sequence of the ribosome-nascent chain (RNC) as it emerges from the ribosomes. The SRP-RNC complex is then targeted to the cytoplasmic membrane where it interacts with the SRP receptor FtsY. In Pyrobaculum calidifontis (strain DSM 21063 / JCM 11548 / VA1), this protein is Signal recognition particle 54 kDa protein.